A 145-amino-acid polypeptide reads, in one-letter code: Putative pre-16S rRNA nuclease (145 aa).

Belongs to the YqgF nuclease family.

It is found in the cytoplasm. Functionally, could be a nuclease involved in processing of the 5'-end of pre-16S rRNA. The protein is Putative pre-16S rRNA nuclease of Pseudomonas fluorescens (strain Pf0-1).